Reading from the N-terminus, the 212-residue chain is MKGGRDLKAARGGADRPLAPAYAPCRPGRLQRHLLSGEFDQLRDFPIFESNFVQVTRFGEVANKVTMGVAASSPALELPDLLLLAGPDKENGHLQLLGLFPLQFVQLFVHDESRQQLKVKFRTGRAFYLQLRSPPETRDCEFGRWVRLLYRLRFHSPTCAVPFTHEDTAPEEEEEEEEEEEEEEVKEGQLQPPEFQATEARLDPQVSELWGL.

2 disordered regions span residues 1 to 21 (MKGG…LAPA) and 162 to 212 (PFTH…LWGL). Positions 169–185 (APEEEEEEEEEEEEEEV) are enriched in acidic residues.

It belongs to the GARIN family. As to quaternary structure, interacts (via N-terminus) with RAB2B (in GTP-bound form). As to expression, expressed in testis (at protein level).

It localises to the golgi apparatus. Its function is as follows. RAB2B effector protein which promotes cytosolic DNA-induced innate immune responses. Regulates IFN responses against DNA viruses by regulating the CGAS-STING signaling axis. The protein is Golgi-associated RAB2 interactor protein 5A of Mus musculus (Mouse).